Consider the following 130-residue polypeptide: Profilin-1 (130 aa).

It belongs to the profilin family. In terms of assembly, interacts with actin. Interacts with RHO1 (GTP-bound form).

It localises to the cytoplasm. The protein resides in the cytoskeleton. It is found in the cell projection. The protein localises to the phagocytic cup. Its subcellular location is the cytoplasmic vesicle. It localises to the phagosome. In terms of biological role, binds to actin and affects the structure of the cytoskeleton. At high concentrations, profilin prevents the polymerization of actin, whereas it enhances it at low concentrations. By binding to PIP2, it inhibits the formation of IP3 and DG. The protein is Profilin-1 of Entamoeba histolytica (strain ATCC 30459 / HM-1:IMSS / ABRM).